A 1193-amino-acid polypeptide reads, in one-letter code: Laminin subunit gamma-2 (1193 aa).

The signal sequence occupies residues 1 to 21; the sequence is MPALWLGCCLCFSLLLPAARA. 12 disulfide bridges follow: cysteine 28-cysteine 37, cysteine 30-cysteine 53, cysteine 56-cysteine 65, cysteine 68-cysteine 81, cysteine 84-cysteine 96, cysteine 86-cysteine 102, cysteine 104-cysteine 113, cysteine 116-cysteine 128, cysteine 139-cysteine 150, cysteine 141-cysteine 155, cysteine 157-cysteine 166, and cysteine 169-cysteine 184. 3 Laminin EGF-like domains span residues 28–83, 84–130, and 139–186; these read CDCN…RCLP, CNCN…GCTQ, and CDCD…GCTQ. The 10-residue stretch at 187-196 folds into the Laminin EGF-like 4; first part domain; sequence CFCYGHSASC. The region spanning 213-381 is the Laminin IV type A domain; the sequence is QDVDGWKAVQ…SGAPAPWVEQ (169 aa). N-linked (GlcNAc...) asparagine glycans are attached at residues asparagine 342 and asparagine 362. A Laminin EGF-like 4; second part domain is found at 382–415; sequence CICPVGYKGQFCQDCASGYKRDSARLGPFGTCIP. Laminin EGF-like domains are found at residues 416 to 461, 462 to 516, and 517 to 572; these read CNCQ…SCKP, CPCH…PCQP, and CQCN…KCRA. Intrachain disulfides connect cysteine 462-cysteine 470, cysteine 464-cysteine 481, cysteine 484-cysteine 493, cysteine 496-cysteine 514, cysteine 517-cysteine 531, cysteine 519-cysteine 538, cysteine 541-cysteine 550, cysteine 553-cysteine 570, cysteine 573-cysteine 585, cysteine 575-cysteine 591, and cysteine 593-cysteine 602. Residues 573-602 form the Laminin EGF-like 8; truncated domain; that stretch reads CNCNPMGSEPVGCRSDGTCVCKPGFGGPNC. The tract at residues 603 to 1193 is domain II and I; sequence EHGAFSCPAC…CYNTQALEQQ (591 aa). Positions 611-718 form a coiled coil; the sequence is ACYNQVKIQM…GSQYQNRVRD (108 aa). Serine 803 and serine 805 each carry an O-linked (Xyl...) (chondroitin sulfate) serine glycan. Coiled-coil stretches lie at residues 811–1076 and 1117–1193; these read AVVQ…AVQM and EEGL…LEQQ. 2 N-linked (GlcNAc...) asparagine glycosylation sites follow: asparagine 942 and asparagine 1033.

As to quaternary structure, laminin is a complex glycoprotein, consisting of three different polypeptide chains (alpha, beta, gamma), which are bound to each other by disulfide bonds into a cross-shaped molecule comprising one long and three short arms with globules at each end. Gamma-2 is a subunit of laminin-5 (laminin-332 or epiligrin/kalinin/nicein). In terms of processing, O-glycosylated; contains chondroitin sulfate (CS). CS attachment is on either Ser-803 or Ser-805. The large variant is expressed only in specific epithelial cells of embryonic and neonatal tissues. In 17-week old embryo the small variant is found in cerebral cortex, lung, and distal tubes of kidney, but not in epithelia except for distal tubuli.

The protein localises to the secreted. It is found in the extracellular space. Its subcellular location is the extracellular matrix. The protein resides in the basement membrane. Binding to cells via a high affinity receptor, laminin is thought to mediate the attachment, migration and organization of cells into tissues during embryonic development by interacting with other extracellular matrix components. Ladsin exerts cell-scattering activity toward a wide variety of cells, including epithelial, endothelial, and fibroblastic cells. This Homo sapiens (Human) protein is Laminin subunit gamma-2 (LAMC2).